Here is a 139-residue protein sequence, read N- to C-terminus: ATP synthase epsilon chain (139 aa).

Belongs to the ATPase epsilon chain family. As to quaternary structure, F-type ATPases have 2 components, CF(1) - the catalytic core - and CF(0) - the membrane proton channel. CF(1) has five subunits: alpha(3), beta(3), gamma(1), delta(1), epsilon(1). CF(0) has three main subunits: a, b and c.

The protein localises to the cell inner membrane. Functionally, produces ATP from ADP in the presence of a proton gradient across the membrane. The sequence is that of ATP synthase epsilon chain from Marinomonas sp. (strain MWYL1).